A 757-amino-acid polypeptide reads, in one-letter code: Two pore calcium channel protein 1 (757 aa).

Residues 1–94 (MRERGEMREA…NDTRFERAMR (94 aa)) are Cytoplasmic-facing. The interval 24–48 (HSHGSGSSGTGSHTSGGGGGWRGSR) is disordered. The segment covering 29 to 45 (GSSGTGSHTSGGGGGWR) has biased composition (gly residues). The helical transmembrane segment at 95–115 (FYFVYLRLDWLWSLNLFALIL) threads the bilayer. Over 116–152 (LNFLEKPLWCRGYSQHACDQRDLYFLGQLPYLSKTES) the chain is Extracellular. Residues 153-173 (LIYEGLTLVILVMDIFYPLSY) form a helical membrane-spanning segment. The Cytoplasmic segment spans residues 174-188 (EGLNLFWKNTINKLK). The helical transmembrane segment at 189-209 (VLLLFILACDILVFAFSPQPF) threads the bilayer. Position 210 (R210) is a topological domain, extracellular. The helical; Voltage-sensor transmembrane segment at 211 to 228 (VAPYIRVAFLIMNIRELR) threads the bilayer. Over 229 to 233 (MCAVT) the chain is Cytoplasmic. The chain crosses the membrane as a helical span at residues 234 to 254 (LVGMVGTYLNVLALSLLFLLF). Topologically, residues 255 to 270 (ASWLAYVTFEDTPQGK) are extracellular. Residues 271–285 (TVFSSYGTTLYQMFI) constitute an intramembrane region (pore-forming). Residues 286 to 308 (LFTTSNNPDVWVPAYKSSRWSSL) are Extracellular-facing. The helical transmembrane segment at 309–329 (FFIVYVLLGVYFLTNLILAVI) threads the bilayer. Residues 330 to 453 (YDSFKEQLAK…LCEWLKSFVR (124 aa)) lie on the Cytoplasmic side of the membrane. 2 EF-hand domains span residues 347–382 (TRKS…LNKY) and 388–423 (TSRE…IAIK). Residues 454–474 (SPLFEYIVIFVLLMNLVAVII) traverse the membrane as a helical segment. At 475–493 (ETTLDIENSSSQKVWQEVE) the chain is on the extracellular side. A glycan (N-linked (GlcNAc...) asparagine) is linked at N482. A helical membrane pass occupies residues 494 to 514 (FVFGWIYVIEMALKIFSLGFG). At 515 to 523 (AYWMEGQNK) the chain is on the cytoplasmic side. The helical transmembrane segment at 524 to 544 (FDFVLTWTIFIGETLTFAFPS) threads the bilayer. The Extracellular portion of the chain corresponds to 545–553 (KLSFLSNGE). The helical; Voltage-sensor transmembrane segment at 554–571 (WIRYLLLGRMLRLTRILL) threads the bilayer. Over 572-595 (QVRRFRAFVATFFTLMSSLMPYLG) the chain is Cytoplasmic. Residues 596–616 (IVFCTLCIYCSLGLQIFGGIV) form a helical membrane-spanning segment. Over 617-640 (YAGNPTLEETDLFSNDYLLFNFND) the chain is Extracellular. The pore-forming intramembrane region spans 641–655 (YPSGMVTLFNLLVMG). Topologically, residues 656 to 676 (NWQAWMESYRQLTGSYWSLIY) are extracellular. A helical transmembrane segment spans residues 677 to 697 (FVSFYLISVLLLLNLIVAFVL). Residues 698 to 757 (EAFFAEMELEKDGEADIQDPTLEGRNRRRSVRVRTKGTMVDILLHHMLSNELDGSQNRDQ) lie on the Cytoplasmic side of the membrane.

This sequence belongs to the calcium channel alpha-1 subunit (TC 1.A.1.11) family. Two pore calcium channel subfamily. Homodimer. Expressed in shoot, mature leaf, cultured cells, and at lower level in roots.

Its subcellular location is the membrane. Its activity is regulated as follows. Inhibited by the VDCC blocker verapamil in yeast cells. Channel activity may be down-regulated by cytosolic Ca(2+) in rice cells. Inhibited by Al(3+). In terms of biological role, may function as one of the major voltage-gated Ca(2+) channel (VDCC) across the plasma membrane. May be involved in the regulation of cytosolic Ca(2+) and in growth and development. Acts as the major ROS-responsive Ca(2+) channel and is the possible target of Al-dependent inhibition. Determines sensitivity to T.viride xylanase elicitor. Plays a regulatory role in elicitor-induced defense responses and hypersensitive cell death. The sequence is that of Two pore calcium channel protein 1 (TPC1) from Oryza sativa subsp. japonica (Rice).